A 485-amino-acid chain; its full sequence is 3-isopropylmalate dehydratase large subunit (485 aa).

The [4Fe-4S] cluster site is built by Cys367, Cys427, and Cys430. The segment covering Ser439–Asn451 has biased composition (polar residues). A disordered region spans residues Ser439–Thr462.

Belongs to the aconitase/IPM isomerase family. LeuC type 1 subfamily. As to quaternary structure, heterodimer of LeuC and LeuD. [4Fe-4S] cluster is required as a cofactor.

It carries out the reaction (2R,3S)-3-isopropylmalate = (2S)-2-isopropylmalate. It functions in the pathway amino-acid biosynthesis; L-leucine biosynthesis; L-leucine from 3-methyl-2-oxobutanoate: step 2/4. Catalyzes the isomerization between 2-isopropylmalate and 3-isopropylmalate, via the formation of 2-isopropylmaleate. The sequence is that of 3-isopropylmalate dehydratase large subunit from Actinoplanes teichomyceticus.